The sequence spans 147 residues: Basic phospholipase A2 beta-bungarotoxin A2 chain (147 aa).

Positions Met1 to Ala19 are cleaved as a signal peptide. The propeptide occupies Ala20–Leu27. Cystine bridges form between Cys54–Cys146, Cys56–Cys72, Cys71–Cys127, Cys78–Cys120, Cys88–Cys113, and Cys106–Cys118. Ca(2+) contacts are provided by Tyr55, Gly57, and Gly59. His75 is a catalytic residue. Asp76 serves as a coordination point for Ca(2+). Asp121 is an active-site residue.

Belongs to the phospholipase A2 family. Group I subfamily. D49 sub-subfamily. As to quaternary structure, heterodimer; disulfide-linked. The A chains have phospholipase A2 activity and the B chains show homology with the basic protease inhibitors. Ca(2+) serves as cofactor. As to expression, expressed by the venom gland.

The protein localises to the secreted. It carries out the reaction a 1,2-diacyl-sn-glycero-3-phosphocholine + H2O = a 1-acyl-sn-glycero-3-phosphocholine + a fatty acid + H(+). Functionally, snake venom phospholipase A2 (PLA2) that inhibits neuromuscular transmission by blocking acetylcholine release from the nerve termini. PLA2 catalyzes the calcium-dependent hydrolysis of the 2-acyl groups in 3-sn-phosphoglycerides. In Bungarus caeruleus (Indian krait), this protein is Basic phospholipase A2 beta-bungarotoxin A2 chain.